We begin with the raw amino-acid sequence, 335 residues long: Fructose-1,6-bisphosphatase class 1 (335 aa).

Glu-92, Asp-114, Leu-116, and Asp-117 together coordinate Mg(2+). Residues 117–120, Asn-209, and Lys-275 each bind substrate; that span reads DGSS. Glu-281 is a binding site for Mg(2+).

This sequence belongs to the FBPase class 1 family. Homotetramer. Requires Mg(2+) as cofactor.

It is found in the cytoplasm. It carries out the reaction beta-D-fructose 1,6-bisphosphate + H2O = beta-D-fructose 6-phosphate + phosphate. The protein operates within carbohydrate biosynthesis; gluconeogenesis. The protein is Fructose-1,6-bisphosphatase class 1 of Paracidovorax citrulli (strain AAC00-1) (Acidovorax citrulli).